An 867-amino-acid polypeptide reads, in one-letter code: Transcription factor E2F8 (867 aa).

The segment at 38-58 (DFGPLTTPTKPKEGSQGEPWT) is disordered. 2 positions are modified to phosphoserine: serine 71 and serine 102. DNA-binding regions lie at residues 113–182 (RKEK…TWHG) and 261–347 (RKDK…KWTG). Disordered stretches follow at residues 408–432 (RRKI…NSAP), 532–616 (QSVT…SGSK), and 771–800 (APEN…GQSV). Phosphoserine occurs at positions 413 and 417. 2 stretches are compositionally biased toward polar residues: residues 413–432 (SAPS…NSAP) and 532–556 (QSVT…TGSK). Residues 557-567 (DSTDATTEKAA) show a composition bias toward basic and acidic residues. The span at 568 to 579 (NDTSKASASTRP) shows a compositional bias: polar residues. Over residues 594 to 604 (RTREPAGERGS) the composition is skewed to basic and acidic residues. Polar residues predominate over residues 775–800 (AGTQQGRATNYDSPVPGQSQPNGQSV).

The protein belongs to the E2F/DP family. In terms of assembly, homodimer and heterodimer: mainly forms homodimers and, to a lesser extent, heterodimers with E2F8. Dimerization is important for DNA-binding. Interacts with HIF1A.

It localises to the nucleus. Functionally, atypical E2F transcription factor that participates in various processes such as angiogenesis and polyploidization of specialized cells. Mainly acts as a transcription repressor that binds DNA independently of DP proteins and specifically recognizes the E2 recognition site 5'-TTTC[CG]CGC-3'. Directly represses transcription of classical E2F transcription factors such as E2F1: component of a feedback loop in S phase by repressing the expression of E2F1, thereby preventing p53/TP53-dependent apoptosis. Plays a key role in polyploidization of cells in placenta and liver by regulating the endocycle, probably by repressing genes promoting cytokinesis and antagonizing action of classical E2F proteins (E2F1, E2F2 and/or E2F3). Required for placental development by promoting polyploidization of trophoblast giant cells. Acts as a promoter of sprouting angiogenesis, possibly by acting as a transcription activator: associates with HIF1A, recognizes and binds the VEGFA promoter, which is different from canonical E2 recognition site, and activates expression of the VEGFA gene. The protein is Transcription factor E2F8 (E2F8) of Homo sapiens (Human).